We begin with the raw amino-acid sequence, 147 residues long: Hemoglobin subunit beta (147 aa).

Val2 carries the N-acetylvaline modification. A Globin domain is found at 3–147 (HMSAEEKGIV…VAAALAHKYH (145 aa)). At Thr13 the chain carries Phosphothreonine. The residue at position 45 (Ser45) is a Phosphoserine. At Lys60 the chain carries N6-acetyllysine. His64 is a binding site for heme b. An N6-acetyllysine modification is found at Lys83. His93 contributes to the heme b binding site. Position 94 is an S-nitrosocysteine (Cys94). Lys145 carries the N6-acetyllysine modification.

Belongs to the globin family. In terms of assembly, heterotetramer of two alpha chains and two beta chains. Red blood cells.

Its function is as follows. Involved in oxygen transport from the lung to the various peripheral tissues. This Scalopus aquaticus (Eastern mole) protein is Hemoglobin subunit beta (HBB).